Consider the following 379-residue polypeptide: UDP-4-amino-4-deoxy-L-arabinose--oxoglutarate aminotransferase (379 aa).

Lysine 182 carries the N6-(pyridoxal phosphate)lysine modification.

This sequence belongs to the DegT/DnrJ/EryC1 family. ArnB subfamily. As to quaternary structure, homodimer. It depends on pyridoxal 5'-phosphate as a cofactor.

It catalyses the reaction UDP-4-amino-4-deoxy-beta-L-arabinose + 2-oxoglutarate = UDP-beta-L-threo-pentopyranos-4-ulose + L-glutamate. Its pathway is nucleotide-sugar biosynthesis; UDP-4-deoxy-4-formamido-beta-L-arabinose biosynthesis; UDP-4-deoxy-4-formamido-beta-L-arabinose from UDP-alpha-D-glucuronate: step 2/3. It participates in bacterial outer membrane biogenesis; lipopolysaccharide biosynthesis. Its function is as follows. Catalyzes the conversion of UDP-4-keto-arabinose (UDP-Ara4O) to UDP-4-amino-4-deoxy-L-arabinose (UDP-L-Ara4N). The modified arabinose is attached to lipid A and is required for resistance to polymyxin and cationic antimicrobial peptides. The sequence is that of UDP-4-amino-4-deoxy-L-arabinose--oxoglutarate aminotransferase from Escherichia coli O157:H7.